A 271-amino-acid polypeptide reads, in one-letter code: Solute carrier family 66 member 2 (271 aa).

3 consecutive transmembrane segments (helical) span residues 8–28 (WLLV…MVFG), 49–69 (FSTY…LFWF), and 76–96 (PLLW…KLCT). In terms of domain architecture, PQ-loop 1 spans 14 to 80 (HQLVSWGAAA…RRFESPLLWQ (67 aa)). Position 110 is a phosphoserine (Ser-110). Helical transmembrane passes span 145–165 (DYVQ…YLSI), 168–188 (ALFV…LGVP), and 232–252 (VCGL…YAFA). Residues 178-233 (AVLTEAMLGVPQLYRNHRHQSTEGMSIKMVLMWTSGDAFKTAYFLLKGAPLQFSVC) form the PQ-loop 2 domain.

The protein resides in the membrane. This chain is Solute carrier family 66 member 2, found in Homo sapiens (Human).